The chain runs to 227 residues: Venom allergen 5 (227 aa).

Residues 1–21 (MKISCLICLVIVLTIIHLSQA) form the signal peptide. Cystine bridges form between C25-C37, C29-C125, C49-C117, and C193-C210. In terms of domain architecture, SCP spans 69 to 212 (EEHNRFRQKV…MQIHYLICNY (144 aa)).

The protein belongs to the CRISP family. Venom allergen 5-like subfamily. Expressed by the venom gland.

The protein resides in the secreted. This Polistes dominula (European paper wasp) protein is Venom allergen 5.